We begin with the raw amino-acid sequence, 383 residues long: L-lactate dehydrogenase (383 aa).

In terms of domain architecture, FMN hydroxy acid dehydrogenase spans 1–380; it reads MIISSGNDYR…NTDCLVQAIK (380 aa). Residue Tyr-24 coordinates substrate. 2 residues coordinate FMN: Ser-106 and Gln-127. Position 129 (Tyr-129) interacts with substrate. Thr-155 is a binding site for FMN. Arg-164 is a substrate binding site. Lys-251 contributes to the FMN binding site. His-275 serves as the catalytic Proton acceptor. Arg-278 lines the substrate pocket. Residue 306 to 330 coordinates FMN; the sequence is DSGIRNGLDVVRMLALGADTVLLGR.

Belongs to the FMN-dependent alpha-hydroxy acid dehydrogenase family. It depends on FMN as a cofactor.

It is found in the cell inner membrane. It carries out the reaction (S)-lactate + A = pyruvate + AH2. Functionally, catalyzes the conversion of L-lactate to pyruvate. Is coupled to the respiratory chain. The protein is L-lactate dehydrogenase of Acinetobacter baumannii (strain SDF).